The sequence spans 360 residues: NADH-quinone oxidoreductase subunit H (360 aa).

8 consecutive transmembrane segments (helical) span residues 22–42 (ITVGLVVSVIVKIVIILIPLI), 97–117 (ALFYIGPIMSLAPSFAAWAVI), 130–150 (IGLLYILMITSLSVYGVIIAG), 170–190 (ISYEIAMSAALVCVVMVSGSM), 208–228 (VFSWNWLPLFPIFIVYLISAV), 255–275 (GFAFALFFLAEYIFMILIAAL), 292–312 (WGFIGTPSAFWMFVKMAAVLY), and 336–356 (VLIPIGFAYIVILGVWMISPL).

This sequence belongs to the complex I subunit 1 family. As to quaternary structure, NDH-1 is composed of 14 different subunits. Subunits NuoA, H, J, K, L, M, N constitute the membrane sector of the complex.

It is found in the cell inner membrane. The catalysed reaction is a quinone + NADH + 5 H(+)(in) = a quinol + NAD(+) + 4 H(+)(out). Functionally, NDH-1 shuttles electrons from NADH, via FMN and iron-sulfur (Fe-S) centers, to quinones in the respiratory chain. The immediate electron acceptor for the enzyme in this species is believed to be ubiquinone. Couples the redox reaction to proton translocation (for every two electrons transferred, four hydrogen ions are translocated across the cytoplasmic membrane), and thus conserves the redox energy in a proton gradient. This subunit may bind ubiquinone. This is NADH-quinone oxidoreductase subunit H from Neisseria meningitidis serogroup C / serotype 2a (strain ATCC 700532 / DSM 15464 / FAM18).